We begin with the raw amino-acid sequence, 599 residues long: Sodium-dependent phosphate transport protein 2C (599 aa).

Residues 1–76 (MPSSLPGSQV…RRVAGSVLKA (76 aa)) are Cytoplasmic-facing. S4 carries the phosphoserine modification. The helical transmembrane segment at 77–97 (CGLLGSLYFFICSLDVLSSAF) threads the bilayer. Over 98-111 (QLLGSKVAGDIFKD) the chain is Extracellular. The chain crosses the membrane as a helical span at residues 112 to 132 (NVVLSNPVAGLVIGVLVTALV). The Cytoplasmic portion of the chain corresponds to 133-188 (QSSSTSSSIVVSMVAAKLLTVRVSVPIIMGVNVGTSITSTLVSMAQSGDRDEFQRA). Residues 189-209 (FSGSAVHGIFNWLTVLVLLPL) traverse the membrane as a helical segment. The Extracellular segment spans residues 210 to 322 (ESATALLERL…FAGTELTDLA (113 aa)). Residues N265, N268, N286, and N299 are each glycosylated (N-linked (GlcNAc...) asparagine). An intrachain disulfide couples C276 to C309. A helical membrane pass occupies residues 323-343 (VGCILLAGSLLVLCGCLVLIV). The Cytoplasmic portion of the chain corresponds to 344-367 (KLLNSVLRGRVAQVVRTVINADFP). Residues 368–388 (FPLGWLGGYLAVLAGAGLTFA) form a helical membrane-spanning segment. At 389 to 445 (LQSSSVFTAAVVPLMGVGVISLDRAYPLLLGSNIGTTTTALLAALASPADRMLSALQ) the chain is on the extracellular side. The helical transmembrane segment at 446–466 (VALIHFFFNLAGILLWYLVPA) threads the bilayer. Over 467–485 (LRLPIPLARHFGVVTARYR) the chain is Cytoplasmic. Residues 486–506 (WVAGVYLLLGFLLLPLAAFGL) form a helical membrane-spanning segment. The Extracellular portion of the chain corresponds to 507 to 510 (SLAG). Residues 511-531 (GMELAAVGGPLVGLVLLVILV) form a helical membrane-spanning segment. Topologically, residues 532 to 599 (TVLQRRRPAW…NPEILASQQL (68 aa)) are cytoplasmic.

This sequence belongs to the SLC34A transporter family. As to expression, expressed only in the kidney.

It is found in the apical cell membrane. The enzyme catalyses 2 Na(+)(out) + phosphate(out) = 2 Na(+)(in) + phosphate(in). Its function is as follows. Involved in actively transporting phosphate into cells via Na(+) cotransport in the renal brush border membrane. The cotransport has a Na(+):Pi stoichiometry of 2:1 and is electroneutral. This chain is Sodium-dependent phosphate transport protein 2C (SLC34A3), found in Homo sapiens (Human).